Here is a 1690-residue protein sequence, read N- to C-terminus: DNA-directed RNA polymerase subunit beta' (1690 aa).

Zn(2+) contacts are provided by C63, C65, C78, and C81. Mg(2+) contacts are provided by D753, D755, and D757. Zn(2+) contacts are provided by C1107, C1295, C1302, and C1305.

This sequence belongs to the RNA polymerase beta' chain family. As to quaternary structure, the RNAP catalytic core consists of 2 alpha, 1 beta, 1 beta' and 1 omega subunit. When a sigma factor is associated with the core the holoenzyme is formed, which can initiate transcription. Mg(2+) is required as a cofactor. Zn(2+) serves as cofactor.

The catalysed reaction is RNA(n) + a ribonucleoside 5'-triphosphate = RNA(n+1) + diphosphate. DNA-dependent RNA polymerase catalyzes the transcription of DNA into RNA using the four ribonucleoside triphosphates as substrates. This is DNA-directed RNA polymerase subunit beta' from Thermotoga maritima (strain ATCC 43589 / DSM 3109 / JCM 10099 / NBRC 100826 / MSB8).